Reading from the N-terminus, the 498-residue chain is Lysine--tRNA ligase (498 aa).

Residues Glu-408 and Glu-415 each contribute to the Mg(2+) site.

It belongs to the class-II aminoacyl-tRNA synthetase family. As to quaternary structure, homodimer. Requires Mg(2+) as cofactor.

The protein localises to the cytoplasm. The enzyme catalyses tRNA(Lys) + L-lysine + ATP = L-lysyl-tRNA(Lys) + AMP + diphosphate. This chain is Lysine--tRNA ligase, found in Pediococcus pentosaceus (strain ATCC 25745 / CCUG 21536 / LMG 10740 / 183-1w).